The chain runs to 151 residues: Large ribosomal subunit protein uL15 (151 aa).

Residues 1–14 (MRREKKSRAYRGSR) are compositionally biased toward basic residues. The disordered stretch occupies residues 1–33 (MRREKKSRAYRGSRTHGWGRVGQHRKSGSRGGR).

This sequence belongs to the universal ribosomal protein uL15 family. As to quaternary structure, part of the 50S ribosomal subunit.

Binds to the 23S rRNA. The sequence is that of Large ribosomal subunit protein uL15 from Thermofilum pendens (strain DSM 2475 / Hrk 5).